The primary structure comprises 286 residues: Bifunctional protein FolD (286 aa).

NADP(+) contacts are provided by residues 166-168 (GAS) and Ile-232.

This sequence belongs to the tetrahydrofolate dehydrogenase/cyclohydrolase family. As to quaternary structure, homodimer.

It carries out the reaction (6R)-5,10-methylene-5,6,7,8-tetrahydrofolate + NADP(+) = (6R)-5,10-methenyltetrahydrofolate + NADPH. The enzyme catalyses (6R)-5,10-methenyltetrahydrofolate + H2O = (6R)-10-formyltetrahydrofolate + H(+). It participates in one-carbon metabolism; tetrahydrofolate interconversion. Catalyzes the oxidation of 5,10-methylenetetrahydrofolate to 5,10-methenyltetrahydrofolate and then the hydrolysis of 5,10-methenyltetrahydrofolate to 10-formyltetrahydrofolate. This chain is Bifunctional protein FolD, found in Vibrio parahaemolyticus serotype O3:K6 (strain RIMD 2210633).